A 314-amino-acid polypeptide reads, in one-letter code: Probable cell division protein WhiA (314 aa).

A DNA-binding region (H-T-H motif) is located at residues 275 to 309 (SLKELGELVTSGAISKSGVNHRLKKIDEFAEKIKR).

Belongs to the WhiA family.

Involved in cell division and chromosome segregation. The protein is Probable cell division protein WhiA of Oceanobacillus iheyensis (strain DSM 14371 / CIP 107618 / JCM 11309 / KCTC 3954 / HTE831).